The primary structure comprises 450 residues: Tubulin alpha-6 chain (450 aa).

GTP-binding residues include Q11, E71, G144, T145, T179, N206, and N228. A Mg(2+)-binding site is contributed by E71. The active site involves E254.

This sequence belongs to the tubulin family. Dimer of alpha and beta chains. A typical microtubule is a hollow water-filled tube with an outer diameter of 25 nm and an inner diameter of 15 nM. Alpha-beta heterodimers associate head-to-tail to form protofilaments running lengthwise along the microtubule wall with the beta-tubulin subunit facing the microtubule plus end conferring a structural polarity. Microtubules usually have 13 protofilaments but different protofilament numbers can be found in some organisms and specialized cells. It depends on Mg(2+) as a cofactor. Post-translationally, undergoes a tyrosination/detyrosination cycle, the cyclic removal and re-addition of a C-terminal tyrosine residue by the enzymes tubulin tyrosine carboxypeptidase (TTCP) and tubulin tyrosine ligase (TTL), respectively.

It localises to the cytoplasm. It is found in the cytoskeleton. It catalyses the reaction GTP + H2O = GDP + phosphate + H(+). Its function is as follows. Tubulin is the major constituent of microtubules, a cylinder consisting of laterally associated linear protofilaments composed of alpha- and beta-tubulin heterodimers. Microtubules grow by the addition of GTP-tubulin dimers to the microtubule end, where a stabilizing cap forms. Below the cap, tubulin dimers are in GDP-bound state, owing to GTPase activity of alpha-tubulin. This chain is Tubulin alpha-6 chain (TUBA6), found in Zea mays (Maize).